Here is a 119-residue protein sequence, read N- to C-terminus: Large ribosomal subunit protein bL19 (119 aa).

The protein belongs to the bacterial ribosomal protein bL19 family.

Its function is as follows. This protein is located at the 30S-50S ribosomal subunit interface and may play a role in the structure and function of the aminoacyl-tRNA binding site. This Idiomarina loihiensis (strain ATCC BAA-735 / DSM 15497 / L2-TR) protein is Large ribosomal subunit protein bL19.